We begin with the raw amino-acid sequence, 460 residues long: MVNLGNAVRSLLMHLIGLLVWQFDISISPVAAIVTDTFNSSDGGRLFQFPDGVQNWPALSIVVIIIMTIGGNILVIMAVSMEKKLHNATNYFLMSLAIADMLVGLLVMPLSLLAILYDYVWPLPRYLCPVWISLDVLFSTASIMHLCAISLDRYVAIRNPIEHSRFNSRTKAIMKIAIVWAISIGVSVPIPVIGLRDESKVFVNNTTCVLNDPNFVLIGSFVAFFIPLTIMVITYFLTIYVLRRQTLMLLRGHTEEELANMSLNFLNCCCKKNGGEEENAPNPNPDQKPRRKKKEKRPRGTMQAINNEKKASKVLGIVFFVFLIMWCPFFITNILSVLCGKACNQKLMEKLLNVFVWIGYVCSGINPLVYTLFNKIYRRAFSKYLRCDYKPDKKPPVRQIPRVAATALSGRELNVNIYRHTNERVARKANDPEPGIEMQVENLELPVNPSNVVSERISSV.

An N-terminal signal peptide occupies residues 1-32; it reads MVNLGNAVRSLLMHLIGLLVWQFDISISPVAA. The Extracellular segment spans residues 33-56; it reads IVTDTFNSSDGGRLFQFPDGVQNW. Residues 57–81 form a helical membrane-spanning segment; the sequence is PALSIVVIIIMTIGGNILVIMAVSM. The Cytoplasmic segment spans residues 82–87; it reads EKKLHN. Residues 88 to 112 traverse the membrane as a helical segment; sequence ATNYFLMSLAIADMLVGLLVMPLSL. Topologically, residues 113-129 are extracellular; that stretch reads LAILYDYVWPLPRYLCP. Cysteines 128 and 208 form a disulfide. Residues 130–152 form a helical membrane-spanning segment; it reads VWISLDVLFSTASIMHLCAISLD. Thr140 provides a ligand contact to ergotamine. A DRY motif; important for ligand-induced conformation changes motif is present at residues 152-154; the sequence is DRY. Residues 153-168 are Cytoplasmic-facing; sequence RYVAIRNPIEHSRFNS. The chain crosses the membrane as a helical span at residues 169–190; that stretch reads RTKAIMKIAIVWAISIGVSVPI. Residues 191–214 are Extracellular-facing; sequence PVIGLRDESKVFVNNTTCVLNDPN. N-linked (GlcNAc...) asparagine glycosylation is found at Asn204 and Asn205. Residue Leu210 coordinates ergotamine. Residues 215–237 form a helical membrane-spanning segment; that stretch reads FVLIGSFVAFFIPLTIMVITYFL. Topologically, residues 238 to 313 are cytoplasmic; that stretch reads TIYVLRRQTL…AINNEKKASK (76 aa). A disordered region spans residues 276–301; the sequence is EEENAPNPNPDQKPRRKKKEKRPRGT. The span at 289-299 shows a compositional bias: basic residues; that stretch reads PRRKKKEKRPR. Residues 314-338 traverse the membrane as a helical segment; it reads VLGIVFFVFLIMWCPFFITNILSVL. Cys339 and Cys343 are disulfide-bonded. At 339–349 the chain is on the extracellular side; that stretch reads CGKACNQKLME. A helical membrane pass occupies residues 350–372; the sequence is KLLNVFVWIGYVCSGINPLVYTL. The NPxxY motif; important for ligand-induced conformation changes and signaling signature appears at 366–370; that stretch reads NPLVY. At 373–460 the chain is on the cytoplasmic side; sequence FNKIYRRAFS…NVVSERISSV (88 aa). The PDZ-binding signature appears at 458 to 460; that stretch reads SSV.

It belongs to the G-protein coupled receptor 1 family. Interacts with MPDZ. Interacts with ARRB2. Interacts with MPP3; this interaction stabilizes the receptor at the plasma membrane and prevents the desensitization of the HTR2C receptor-mediated calcium response.

It localises to the cell membrane. In terms of biological role, G-protein coupled receptor for 5-hydroxytryptamine (serotonin). Also functions as a receptor for various drugs and psychoactive substances, including ergot alkaloid derivatives, 1-2,5,-dimethoxy-4-iodophenyl-2-aminopropane (DOI) and lysergic acid diethylamide (LSD). Ligand binding causes a conformation change that triggers signaling via guanine nucleotide-binding proteins (G proteins) and modulates the activity of downstream effectors. HTR2C is coupled to G(q)/G(11) G alpha proteins and activates phospholipase C-beta, releasing diacylglycerol (DAG) and inositol 1,4,5-trisphosphate (IP3) second messengers that modulate the activity of phosphatidylinositol 3-kinase and promote the release of Ca(2+) ions from intracellular stores, respectively. Beta-arrestin family members inhibit signaling via G proteins and mediate activation of alternative signaling pathways. Regulates neuronal activity via the activation of short transient receptor potential calcium channels in the brain, and thereby modulates the activation of pro-opiomelanocortin neurons and the release of CRH that then regulates the release of corticosterone. Plays a role in the regulation of appetite and eating behavior, responses to anxiogenic stimuli and stress. Plays a role in insulin sensitivity and glucose homeostasis. The protein is 5-hydroxytryptamine receptor 2C of Rattus norvegicus (Rat).